We begin with the raw amino-acid sequence, 257 residues long: MKDSFKLGNKEFNSRFILGSGKYSNELINSAINYAEAEIVTVAMRRAVSGVQENILDYIPKNITLLPNTSGARNAEEAVKIARLARECIQGDFIKIEVIKDSKYLLPDNYETIKATEILAKEGFIVMPYMYPDLNVARALRDAGASCIMPLAAPIGSNRGLITKEFIQILIDEIDLPIIVDAGIGKPSQACEAIEMGVTAIMANTAIATANDIPRMARAFKYAIQAGREAYLAKLGRVLEKGASASSPLTGFLNGVE.

Lys-95 serves as the catalytic Schiff-base intermediate with DXP. 1-deoxy-D-xylulose 5-phosphate contacts are provided by residues Gly-156, 182–183 (AG), and 204–205 (NT).

Belongs to the ThiG family. In terms of assembly, homotetramer. Forms heterodimers with either ThiH or ThiS.

It localises to the cytoplasm. The catalysed reaction is [ThiS sulfur-carrier protein]-C-terminal-Gly-aminoethanethioate + 2-iminoacetate + 1-deoxy-D-xylulose 5-phosphate = [ThiS sulfur-carrier protein]-C-terminal Gly-Gly + 2-[(2R,5Z)-2-carboxy-4-methylthiazol-5(2H)-ylidene]ethyl phosphate + 2 H2O + H(+). It functions in the pathway cofactor biosynthesis; thiamine diphosphate biosynthesis. Its function is as follows. Catalyzes the rearrangement of 1-deoxy-D-xylulose 5-phosphate (DXP) to produce the thiazole phosphate moiety of thiamine. Sulfur is provided by the thiocarboxylate moiety of the carrier protein ThiS. In vitro, sulfur can be provided by H(2)S. The chain is Thiazole synthase from Fusobacterium nucleatum subsp. nucleatum (strain ATCC 25586 / DSM 15643 / BCRC 10681 / CIP 101130 / JCM 8532 / KCTC 2640 / LMG 13131 / VPI 4355).